Here is a 1227-residue protein sequence, read N- to C-terminus: ATP-dependent helicase/nuclease subunit A (1227 aa).

Residues 37-503 enclose the UvrD-like helicase ATP-binding domain; the sequence is QKRTAEQIEA…ILLKENFRSQ (467 aa). 58-65 serves as a coordination point for ATP; it reads ASAGSGKT. A UvrD-like helicase C-terminal domain is found at 532 to 816; sequence SLVAGSPGQK…QLMTIHKSKG (285 aa).

It belongs to the helicase family. AddA subfamily. Heterodimer of AddA and AddB/RexB. It depends on Mg(2+) as a cofactor.

It catalyses the reaction Couples ATP hydrolysis with the unwinding of duplex DNA by translocating in the 3'-5' direction.. It carries out the reaction ATP + H2O = ADP + phosphate + H(+). In terms of biological role, the heterodimer acts as both an ATP-dependent DNA helicase and an ATP-dependent, dual-direction single-stranded exonuclease. Recognizes the chi site generating a DNA molecule suitable for the initiation of homologous recombination. The AddA nuclease domain is required for chi fragment generation; this subunit has the helicase and 3' -&gt; 5' nuclease activities. The chain is ATP-dependent helicase/nuclease subunit A from Streptococcus suis (strain 98HAH33).